The chain runs to 492 residues: Glycosyltransferase alg8 (492 aa).

4 helical membrane-spanning segments follow: residues 13–32, 47–69, 379–401, and 421–443; these read GWLL…PPQV, IGVW…LYVV, LTVA…LLWV, and PAYP…HVFF.

The protein belongs to the glycosyltransferase 2 family.

It is found in the cell membrane. Its pathway is glycan biosynthesis; alginate biosynthesis. Its function is as follows. Possibly a processive enzyme that polymerizes GDP-mannuronic acid. This Azotobacter vinelandii protein is Glycosyltransferase alg8 (alg8).